An 884-amino-acid polypeptide reads, in one-letter code: Alanine--tRNA ligase (884 aa).

Zn(2+) is bound by residues His562, His566, Cys676, and His680.

Belongs to the class-II aminoacyl-tRNA synthetase family. It depends on Zn(2+) as a cofactor.

The protein resides in the cytoplasm. The enzyme catalyses tRNA(Ala) + L-alanine + ATP = L-alanyl-tRNA(Ala) + AMP + diphosphate. Its function is as follows. Catalyzes the attachment of alanine to tRNA(Ala) in a two-step reaction: alanine is first activated by ATP to form Ala-AMP and then transferred to the acceptor end of tRNA(Ala). Also edits incorrectly charged Ser-tRNA(Ala) and Gly-tRNA(Ala) via its editing domain. This Jannaschia sp. (strain CCS1) protein is Alanine--tRNA ligase.